Here is an 857-residue protein sequence, read N- to C-terminus: Cation/H(+) antiporter 25 (857 aa).

11 consecutive transmembrane segments (helical) span residues 65 to 85 (FSTF…VYVL), 93 to 110 (RIVC…SMLG), 122 to 142 (PIAN…FFFL), 161 to 181 (YIAA…GAAL), 194 to 214 (SIGG…YTVL), 227 to 247 (FAMS…VLFE), 259 to 279 (YSVI…LLVV), 313 to 333 (FLTD…GLVV), 385 to 405 (IYMS…AALF), 413 to 435 (SLTL…LHWI), and 447 to 467 (VMVL…SFLY). A Phosphoserine modification is found at S855.

This sequence belongs to the monovalent cation:proton antiporter 2 (CPA2) transporter (TC 2.A.37) family. CHX (TC 2.A.37.4) subfamily. As to expression, specifically expressed in pollen.

The protein localises to the membrane. In terms of biological role, may operate as a cation/H(+) antiporter. This Arabidopsis thaliana (Mouse-ear cress) protein is Cation/H(+) antiporter 25 (CHX25).